The sequence spans 118 residues: Ribonuclease P protein component (118 aa).

The protein belongs to the RnpA family. Consists of a catalytic RNA component (M1 or rnpB) and a protein subunit.

The enzyme catalyses Endonucleolytic cleavage of RNA, removing 5'-extranucleotides from tRNA precursor.. Its function is as follows. RNaseP catalyzes the removal of the 5'-leader sequence from pre-tRNA to produce the mature 5'-terminus. It can also cleave other RNA substrates such as 4.5S RNA. The protein component plays an auxiliary but essential role in vivo by binding to the 5'-leader sequence and broadening the substrate specificity of the ribozyme. The chain is Ribonuclease P protein component from Mycoplasma pneumoniae (strain ATCC 29342 / M129 / Subtype 1) (Mycoplasmoides pneumoniae).